The following is a 274-amino-acid chain: Large ribosomal subunit protein uL2 (274 aa).

The interval 197–274 (NSDHALEKSG…SKYIIERRKK (78 aa)) is disordered. Basic residues-rich tracts occupy residues 207-220 (KAGR…RPHN) and 244-274 (PRSR…RRKK).

The protein belongs to the universal ribosomal protein uL2 family. In terms of assembly, part of the 50S ribosomal subunit. Forms a bridge to the 30S subunit in the 70S ribosome.

One of the primary rRNA binding proteins. Required for association of the 30S and 50S subunits to form the 70S ribosome, for tRNA binding and peptide bond formation. It has been suggested to have peptidyltransferase activity; this is somewhat controversial. Makes several contacts with the 16S rRNA in the 70S ribosome. This is Large ribosomal subunit protein uL2 from Porphyromonas gingivalis (strain ATCC BAA-308 / W83).